Reading from the N-terminus, the 190-residue chain is MAKSVPAIFLDRDGTINVDHGYVHEIDNFEFIDGVIDAMRELKKMGFALVVVTNQSGIARGKFTEAQFETLTEWMDWSLADRDVDLDGIYYCPHHPQGSVEEFRQVCDCRKPHPGMFLSARDYLHIDMAASYMVGDKLEDMQAAAAASVGTKVLVRTGKPITPEAENAADWVLNSLADLPQAIKKQQKPA.

The Nucleophile role is filled by Asp-11. Residues Asp-11 and Asp-13 each contribute to the Mg(2+) site. Residues 11–13 (DRD), 19–22 (DHGY), and 53–56 (TNQS) contribute to the substrate site. Catalysis depends on Asp-13, which acts as the Proton donor. Zn(2+)-binding residues include Cys-92, His-94, Cys-107, and Cys-109. Residue 110 to 111 (RK) participates in substrate binding. The Mg(2+) site is built by Asp-136 and Lys-137. Lys-137 provides a ligand contact to substrate.

This sequence belongs to the GmhB family. Monomer. The cofactor is Mg(2+). Zn(2+) serves as cofactor.

It is found in the cytoplasm. It catalyses the reaction D-glycero-beta-D-manno-heptose 1,7-bisphosphate + H2O = D-glycero-beta-D-manno-heptose 1-phosphate + phosphate. Its pathway is nucleotide-sugar biosynthesis; ADP-L-glycero-beta-D-manno-heptose biosynthesis; ADP-L-glycero-beta-D-manno-heptose from D-glycero-beta-D-manno-heptose 7-phosphate: step 2/4. The protein operates within bacterial outer membrane biogenesis; LPS core biosynthesis. Its function is as follows. Converts the D-glycero-beta-D-manno-heptose 1,7-bisphosphate intermediate into D-glycero-beta-D-manno-heptose 1-phosphate by removing the phosphate group at the C-7 position. In Escherichia coli O6:H1 (strain CFT073 / ATCC 700928 / UPEC), this protein is D-glycero-beta-D-manno-heptose-1,7-bisphosphate 7-phosphatase (gmhB).